A 104-amino-acid chain; its full sequence is Integration host factor subunit beta (104 aa).

It belongs to the bacterial histone-like protein family. In terms of assembly, heterodimer of an alpha and a beta chain.

This protein is one of the two subunits of integration host factor, a specific DNA-binding protein that functions in genetic recombination as well as in transcriptional and translational control. The protein is Integration host factor subunit beta (ihfB) of Xylella fastidiosa (strain 9a5c).